We begin with the raw amino-acid sequence, 160 residues long: Nucleotide-binding protein BP2916 (160 aa).

This sequence belongs to the YajQ family.

Functionally, nucleotide-binding protein. The sequence is that of Nucleotide-binding protein BP2916 from Bordetella pertussis (strain Tohama I / ATCC BAA-589 / NCTC 13251).